The following is a 552-amino-acid chain: Glutamine--tRNA ligase (552 aa).

Residues 34–44 (PEPNGYLHIGH) carry the 'HIGH' region motif. ATP contacts are provided by residues 35 to 37 (EPN) and 41 to 47 (HIGHAKS). Residues Asp67 and Tyr212 each coordinate L-glutamine. Residues Thr231, 261 to 262 (RL), and 269 to 271 (MSK) each bind ATP. Positions 268–272 (LMSKR) match the 'KMSKS' region motif.

The protein belongs to the class-I aminoacyl-tRNA synthetase family. Monomer.

The protein localises to the cytoplasm. The catalysed reaction is tRNA(Gln) + L-glutamine + ATP = L-glutaminyl-tRNA(Gln) + AMP + diphosphate. The chain is Glutamine--tRNA ligase from Hamiltonella defensa subsp. Acyrthosiphon pisum (strain 5AT).